Consider the following 158-residue polypeptide: UPF0262 protein R00612 (158 aa).

This sequence belongs to the UPF0262 family.

This Rhizobium meliloti (strain 1021) (Ensifer meliloti) protein is UPF0262 protein R00612.